Here is a 130-residue protein sequence, read N- to C-terminus: Small ribosomal subunit protein uS8z/uS8w (130 aa).

It belongs to the universal ribosomal protein uS8 family.

The protein localises to the cytoplasm. This chain is Small ribosomal subunit protein uS8z/uS8w (RPS15AA), found in Arabidopsis thaliana (Mouse-ear cress).